The chain runs to 180 residues: UPF0227 protein KPN78578_10770 (180 aa).

The protein belongs to the UPF0227 family.

The protein is UPF0227 protein KPN78578_10770 of Klebsiella pneumoniae subsp. pneumoniae (strain ATCC 700721 / MGH 78578).